The primary structure comprises 1011 residues: MATSSLCSSFTSQTCNPHSRPHRKTLTLPGSVFLCRQFHLNSPSVSKTRRIRTRQSGPVASLGGLLGGIFKGTDTGEATRKQYAAIVNTINGLEPKISALSDSELRDMTFASRERAQKGESLDSLLPEAFAVVREASKRVLGLRPFDVQLIGGMVLHKGEIAEMRTGEGKTLVAILPAYLNALVGKGVHVVTVNDYLARRDCEWVGQVPRFLGMKVGLIQQNMTSEQKKENYLCDITYVTNSELGFDFLRDNLATSVEELVIRGFNYCVIDEVDSILIDEARTPLIISGPAEKSSDQYFKAAKIADAFERDIHYTVDEKQKSVLLSEQGYEDAEEILAVKDLYDPREQWASFVINAIKAKELFLRDVNYIIRGKEVLIVDEFTGRVMQGRRWSDGLHQAVEAKEGLPIQNETVTLASISYQNFFLQFPKLCGMTGTAATEITEFESIYKLKVTIVPTNKPMIRKDESDVVFRATTGKWRAVVVEISRMNKTGRPVLVGTTSVEQSDSLSQQLKEAGILHEVLNAKPENVEREAEIVAQSGRLGAVTIATNMAGRGTDIILGGNAEFMARLKLREIMMPRVVKLVAEGEFVSVKKPPPSKTWKVNEKLFPCQLSNQNTELAEKAVQLAVKTWGKRSLTELEAEERLSYSCEKGPAQDEVIAELRNAFLEISKEYKVFTEEERKKVVAAGGLHVVGTERHESRRIDNQLRGRSGRQGDLGSSRFFLSLEDNIFRIFGGDRIQGLMRAFRVEDLPIESQMLTKALDEAQKKVENYFFDIRKQLFEYDEVLNSQRDRVYTERRRALQSVNLQSLLIEYAELTIDDILEANIGSDAPKESWDLDKLIAKIQQYCYLLTDLTPDLLLNECSDYEGLRSYLRLRGKEAYLQKRDIVEQQAPGLMKEAERFLILSNIDRLWKEHLQALKFVQQAVGLRGYAQRDPLIEYKLEGYNLFLEMMAQIRRNVIYSIYQFKPVLLKQDQDKMENQKSGKRNARPPTDTNPDPVGTVEPSTSASS.

Positions 1 to 17 (MATSSLCSSFTSQTCNP) are enriched in polar residues. Residues 1–22 (MATSSLCSSFTSQTCNPHSRPH) are disordered. The transit peptide at 1-59 (MATSSLCSSFTSQTCNPHSRPHRKTLTLPGSVFLCRQFHLNSPSVSKTRRIRTRQSGPV) directs the protein to the chloroplast. 164–171 (MRTGEGKT) is an ATP binding site. The tract at residues 976–1011 (QDKMENQKSGKRNARPPTDTNPDPVGTVEPSTSASS) is disordered.

It belongs to the SecA family.

It localises to the plastid. The protein resides in the chloroplast stroma. Its subcellular location is the chloroplast thylakoid membrane. It catalyses the reaction ATP + H2O + chloroplast-proteinSide 1 = ADP + phosphate + chloroplast-proteinSide 2.. In terms of biological role, has a central role in coupling the hydrolysis of ATP to the transfer of proteins across the thylakoid membrane. Facilitates the transport of precursor proteins from the chloroplast stroma to thylakoid lumen. The sequence is that of Protein translocase subunit SecA, chloroplastic from Pisum sativum (Garden pea).